Here is a 311-residue protein sequence, read N- to C-terminus: UDP-N-acetylenolpyruvoylglucosamine reductase (311 aa).

The 163-residue stretch at 29 to 191 (IGGKADIVLK…LSARLKLKPI (163 aa)) folds into the FAD-binding PCMH-type domain. Arg172 is an active-site residue. Ser223 functions as the Proton donor in the catalytic mechanism. The active site involves Glu299.

The protein belongs to the MurB family. FAD is required as a cofactor.

The protein localises to the cytoplasm. It catalyses the reaction UDP-N-acetyl-alpha-D-muramate + NADP(+) = UDP-N-acetyl-3-O-(1-carboxyvinyl)-alpha-D-glucosamine + NADPH + H(+). It participates in cell wall biogenesis; peptidoglycan biosynthesis. Its function is as follows. Cell wall formation. In Chloroherpeton thalassium (strain ATCC 35110 / GB-78), this protein is UDP-N-acetylenolpyruvoylglucosamine reductase.